Reading from the N-terminus, the 330-residue chain is Fructose-1,6-bisphosphatase class 1 (330 aa).

Residues Glu84, Asp103, Leu105, and Asp106 each contribute to the Mg(2+) site. Residues 106–109 (DGSS), Asn196, and Lys262 contribute to the substrate site. Glu268 is a Mg(2+) binding site.

Belongs to the FBPase class 1 family. Homotetramer. Mg(2+) serves as cofactor.

It is found in the cytoplasm. The enzyme catalyses beta-D-fructose 1,6-bisphosphate + H2O = beta-D-fructose 6-phosphate + phosphate. Its pathway is carbohydrate biosynthesis; gluconeogenesis. The sequence is that of Fructose-1,6-bisphosphatase class 1 from Shewanella sp. (strain ANA-3).